The primary structure comprises 1050 residues: MDS1 and EVI1 complex locus protein EVI1-B (1050 aa).

3 consecutive C2H2-type zinc fingers follow at residues 21 to 48 (YHCEECDQLFESKTELSNHQKYSCGTPH), 75 to 97 (HECKECDQVFPDMQSLEKHLLSH), and 103 to 125 (YKCDQCPKAFNWKSNLIRHQMSH). Residues 131–155 (YECENCSKQVFTDPSNLQRHIRSQH) form a C2H2-type 4; degenerate zinc finger. 2 consecutive C2H2-type zinc fingers follow at residues 161–183 (HACSECGKTFATSSGLKQHKHIH) and 189–211 (FVCEVCHKSYTQFSNLCRHKRMH). A C2H2-type 7; atypical zinc finger spans residues 218–240 (IKCKDCGQMFSTTSSLNKHRRFC). 2 disordered regions span residues 371–421 (ITEN…SDKD) and 529–612 (PLKV…EKKD). A compositionally biased stretch (basic and acidic residues) spans 379–390 (RPHEKVSDHSES). A compositionally biased stretch (polar residues) spans 397–411 (STPSGSDLETTSGSD). A Nuclear localization signal motif is present at residues 420–433 (KDKLKENGKLYKDK). Residues 529–542 (PLKVEPESPKESKK) are compositionally biased toward basic and acidic residues. Positions 551–555 (AFDLT) match the CTBP-binding motif 1 motif. Residues 564-576 (SPNAPSKSSAPTS) show a composition bias toward low complexity. The CTBP-binding motif 2 motif lies at 582–586 (PLDLS). Polar residues predominate over residues 588-598 (GSRSRATTTKQ). The span at 599–612 (TESRKNHIFGEKKD) shows a compositional bias: basic and acidic residues. 3 consecutive C2H2-type zinc fingers follow at residues 731–753 (YTCRYCGKIFPRSANLTRHLRTH), 759–782 (YRCKYCDRSFSISSNLQRHIRNIH), and 788–810 (FKCHLCDRCFGQQTNLDRHLKKH). A disordered region spans residues 928–951 (KSEVNCKVSPSRHDDDDDDEEEDF).

Homooligomer. Interacts with ctbp.

Its subcellular location is the nucleus. The protein resides in the nucleus speckle. In terms of biological role, transcriptional repressor during pronephros development. Plays a role in regionalization of the pronephros; may promote formation of the distal tubule and duct over formation of the glomus and proximal tubule. In Xenopus laevis (African clawed frog), this protein is MDS1 and EVI1 complex locus protein EVI1-B (mecom-b).